The primary structure comprises 239 residues: 7-cyano-7-deazaguanine synthase (239 aa).

13 to 23 is an ATP binding site; sequence FSGGQDSTTCL. Residues Cys-192, Cys-201, Cys-204, and Cys-207 each contribute to the Zn(2+) site.

The protein belongs to the QueC family. The cofactor is Zn(2+).

It carries out the reaction 7-carboxy-7-deazaguanine + NH4(+) + ATP = 7-cyano-7-deazaguanine + ADP + phosphate + H2O + H(+). Its pathway is purine metabolism; 7-cyano-7-deazaguanine biosynthesis. In terms of biological role, catalyzes the ATP-dependent conversion of 7-carboxy-7-deazaguanine (CDG) to 7-cyano-7-deazaguanine (preQ(0)). The sequence is that of 7-cyano-7-deazaguanine synthase from Shewanella sp. (strain MR-7).